The sequence spans 119 residues: Fluoride-specific ion channel FluC (119 aa).

The next 4 helical transmembrane spans lie at 5-25 (IIPL…LNLA), 30-50 (IPPA…IGIF), 59-79 (WKLL…GFSL), and 97-117 (IFLH…IGAA). Na(+)-binding residues include G69 and T72.

Belongs to the fluoride channel Fluc/FEX (TC 1.A.43) family.

It localises to the cell inner membrane. It catalyses the reaction fluoride(in) = fluoride(out). Its activity is regulated as follows. Na(+) is not transported, but it plays an essential structural role and its presence is essential for fluoride channel function. In terms of biological role, fluoride-specific ion channel. Important for reducing fluoride concentration in the cell, thus reducing its toxicity. In Neisseria meningitidis serogroup B (strain ATCC BAA-335 / MC58), this protein is Fluoride-specific ion channel FluC.